We begin with the raw amino-acid sequence, 218 residues long: uncharacterized protein (218 aa).

Zn(2+) contacts are provided by H57, H59, D61, H62, H138, D158, and H199.

It belongs to the metallo-beta-lactamase superfamily. Glyoxalase II family. The cofactor is Zn(2+).

This is an uncharacterized protein from Mycobacterium leprae (strain TN).